The sequence spans 157 residues: MQTTISLQVNGQPVEVSAMPDTPLLLILRNDLCLNGPKYGCGLGECGACTVIIDGVAARSCVIPLAGAAGRNITTLEGLGSKAAPHPVQQAFIDEQAAQCGYCMNGMIMTAKALLDRIPEPSDEQIRNELSANLCRCGTHVEILRAVRRAAETRRKP.

The 77-residue stretch at 3-79 (TTISLQVNGQ…GRNITTLEGL (77 aa)) folds into the 2Fe-2S ferredoxin-type domain. Cys-41, Cys-46, Cys-49, and Cys-61 together coordinate [2Fe-2S] cluster.

[2Fe-2S] cluster is required as a cofactor.

It carries out the reaction 2 Fe(III)-[cytochrome] + nicotinate + H2O = 2 Fe(II)-[cytochrome] + 6-hydroxynicotinate + 2 H(+). The protein operates within cofactor degradation; nicotinate degradation. Subunit of the two-component enzyme NicAB that mediates nicotinate hydroxylation, the first step in the aerobic nicotinate degradation pathway. Mediates conversion of nicotinate into 6-hydroxynicotinate (6HNA). This is Nicotinate dehydrogenase subunit A (nicA) from Pseudomonas putida (strain ATCC 47054 / DSM 6125 / CFBP 8728 / NCIMB 11950 / KT2440).